A 228-amino-acid polypeptide reads, in one-letter code: 5'-methylthioadenosine/S-adenosylhomocysteine nucleosidase (228 aa).

Glu-11 functions as the Proton acceptor in the catalytic mechanism. Residues Gly-77, Ile-151, and 172-173 contribute to the substrate site; that span reads ME. Asp-196 functions as the Proton donor in the catalytic mechanism.

The protein belongs to the PNP/UDP phosphorylase family. MtnN subfamily.

It carries out the reaction S-adenosyl-L-homocysteine + H2O = S-(5-deoxy-D-ribos-5-yl)-L-homocysteine + adenine. The catalysed reaction is S-methyl-5'-thioadenosine + H2O = 5-(methylsulfanyl)-D-ribose + adenine. The enzyme catalyses 5'-deoxyadenosine + H2O = 5-deoxy-D-ribose + adenine. It participates in amino-acid biosynthesis; L-methionine biosynthesis via salvage pathway; S-methyl-5-thio-alpha-D-ribose 1-phosphate from S-methyl-5'-thioadenosine (hydrolase route): step 1/2. Functionally, catalyzes the irreversible cleavage of the glycosidic bond in both 5'-methylthioadenosine (MTA) and S-adenosylhomocysteine (SAH/AdoHcy) to adenine and the corresponding thioribose, 5'-methylthioribose and S-ribosylhomocysteine, respectively. Also cleaves 5'-deoxyadenosine, a toxic by-product of radical S-adenosylmethionine (SAM) enzymes, into 5-deoxyribose and adenine. The sequence is that of 5'-methylthioadenosine/S-adenosylhomocysteine nucleosidase from Staphylococcus epidermidis (strain ATCC 12228 / FDA PCI 1200).